We begin with the raw amino-acid sequence, 420 residues long: Histidine--tRNA ligase (420 aa).

Belongs to the class-II aminoacyl-tRNA synthetase family. As to quaternary structure, homodimer.

The protein localises to the cytoplasm. It catalyses the reaction tRNA(His) + L-histidine + ATP = L-histidyl-tRNA(His) + AMP + diphosphate + H(+). In Acholeplasma laidlawii (strain PG-8A), this protein is Histidine--tRNA ligase.